The sequence spans 1020 residues: Protein translocase subunit SecA (1020 aa).

ATP-binding positions include Q99, 117–121, and D633; that span reads GEGKT. The interval 963-992 is disordered; sequence NEQPSQEMAADEETQEESKIEENKPEPIVV. Residues 978–987 are compositionally biased toward basic and acidic residues; sequence EESKIEENKP. Residues C1002, C1004, C1013, and C1014 each contribute to the Zn(2+) site.

Belongs to the SecA family. As to quaternary structure, monomer and homodimer. Part of the essential Sec protein translocation apparatus which comprises SecA, SecYEG and auxiliary proteins SecDF. Other proteins may also be involved. Requires Zn(2+) as cofactor.

It is found in the cell inner membrane. The protein resides in the cytoplasm. The enzyme catalyses ATP + H2O + cellular proteinSide 1 = ADP + phosphate + cellular proteinSide 2.. Part of the Sec protein translocase complex. Interacts with the SecYEG preprotein conducting channel. Has a central role in coupling the hydrolysis of ATP to the transfer of proteins into and across the cell membrane, serving as an ATP-driven molecular motor driving the stepwise translocation of polypeptide chains across the membrane. The protein is Protein translocase subunit SecA of Protochlamydia amoebophila (strain UWE25).